The following is a 64-amino-acid chain: Large ribosomal subunit protein bL28 (64 aa).

Belongs to the bacterial ribosomal protein bL28 family.

The protein is Large ribosomal subunit protein bL28 (rpmB) of Mycobacterium leprae (strain TN).